The primary structure comprises 95 residues: Aspartyl/glutamyl-tRNA(Asn/Gln) amidotransferase subunit C (95 aa).

The protein belongs to the GatC family. In terms of assembly, heterotrimer of A, B and C subunits.

It carries out the reaction L-glutamyl-tRNA(Gln) + L-glutamine + ATP + H2O = L-glutaminyl-tRNA(Gln) + L-glutamate + ADP + phosphate + H(+). The enzyme catalyses L-aspartyl-tRNA(Asn) + L-glutamine + ATP + H2O = L-asparaginyl-tRNA(Asn) + L-glutamate + ADP + phosphate + 2 H(+). Allows the formation of correctly charged Asn-tRNA(Asn) or Gln-tRNA(Gln) through the transamidation of misacylated Asp-tRNA(Asn) or Glu-tRNA(Gln) in organisms which lack either or both of asparaginyl-tRNA or glutaminyl-tRNA synthetases. The reaction takes place in the presence of glutamine and ATP through an activated phospho-Asp-tRNA(Asn) or phospho-Glu-tRNA(Gln). The polypeptide is Aspartyl/glutamyl-tRNA(Asn/Gln) amidotransferase subunit C (Campylobacter curvus (strain 525.92)).